Consider the following 541-residue polypeptide: CRISPR-associated exonuclease Cas4/endonuclease Cas1 fusion (541 aa).

Residues 1-179 (MGIHSLLYCE…NCSLAPVCLP (179 aa)) are CRISPR-associated exonuclease Cas4. Residue Cys-9 participates in [4Fe-4S] cluster binding. Residues Asp-65 and Glu-78 each coordinate Mn(2+). 3 residues coordinate [4Fe-4S] cluster: Cys-168, Cys-171, and Cys-177. The segment at 204 to 541 (TLHVFGHDSR…ANIFAQARLR (338 aa)) is CRISPR-associated endonuclease Cas1. Glu-365, His-433, and Glu-448 together coordinate Mn(2+).

This sequence in the N-terminal section; belongs to the CRISPR-associated exonuclease Cas4 family. It in the C-terminal section; belongs to the CRISPR-associated endonuclease Cas1 family. In terms of assembly, homodimer, forms a heterotetramer with a Cas2 homodimer. [4Fe-4S] cluster is required as a cofactor. Mg(2+) serves as cofactor. The cofactor is Mn(2+).

It catalyses the reaction exonucleolytic cleavage in the 5'- to 3'-direction to yield nucleoside 3'-phosphates.. In terms of biological role, CRISPR (clustered regularly interspaced short palindromic repeat), is an adaptive immune system that provides protection against mobile genetic elements (viruses, transposable elements and conjugative plasmids). CRISPR clusters contain spacers, sequences complementary to antecedent mobile elements, and target invading nucleic acids. CRISPR clusters are transcribed and processed into CRISPR RNA (crRNA). The Cas4 region acts as a ssDNA exonuclease, while the Cas1 region acts as a dsDNA endonuclease. Involved in the integration of spacer DNA into the CRISPR cassette. The chain is CRISPR-associated exonuclease Cas4/endonuclease Cas1 fusion (cas4-cas1) from Leptospira interrogans serogroup Icterohaemorrhagiae serovar Lai (strain 56601).